The primary structure comprises 367 residues: Biotin synthase (367 aa).

Residues 73-308 (CCGNTVDLCS…EQIIRYAGGR (236 aa)) form the Radical SAM core domain. C91, C95, and C98 together coordinate [4Fe-4S] cluster. Residues C136, C173, C233, and R303 each coordinate [2Fe-2S] cluster.

It belongs to the radical SAM superfamily. Biotin synthase family. In terms of assembly, homodimer. [4Fe-4S] cluster is required as a cofactor. Requires [2Fe-2S] cluster as cofactor.

The catalysed reaction is (4R,5S)-dethiobiotin + (sulfur carrier)-SH + 2 reduced [2Fe-2S]-[ferredoxin] + 2 S-adenosyl-L-methionine = (sulfur carrier)-H + biotin + 2 5'-deoxyadenosine + 2 L-methionine + 2 oxidized [2Fe-2S]-[ferredoxin]. It functions in the pathway cofactor biosynthesis; biotin biosynthesis; biotin from 7,8-diaminononanoate: step 2/2. Catalyzes the conversion of dethiobiotin (DTB) to biotin by the insertion of a sulfur atom into dethiobiotin via a radical-based mechanism. In Picosynechococcus sp. (strain ATCC 27264 / PCC 7002 / PR-6) (Agmenellum quadruplicatum), this protein is Biotin synthase.